We begin with the raw amino-acid sequence, 720 residues long: Nucleoporin NUP2 (720 aa).

A disordered region spans residues 1–33 (MAKRVADAQIQRETYDSNESDDDVTPSTKVASS). A phosphoserine mark is found at serine 17 and serine 20. Residues 35–50 (VMNRRKIAMPKRRMAF) form an interaction with SRP1 NLS binding site 1 region. 2 disordered regions span residues 52–92 (PFGS…SNSR) and 136–278 (KSIE…VDNN). The stretch at 67-69 (FSF) is one FXF 1 repeat. The segment covering 81-92 (VDNSPTTESNSR) has biased composition (polar residues). The residue at position 137 (serine 137) is a Phosphoserine. The segment covering 147 to 159 (NDAKPAKVEDVQK) has biased composition (basic and acidic residues). Serine 165 is subject to Phosphoserine. An FXFG 1 repeat occupies 189 to 192 (FSFG). Residues 193–202 (PKKENRKKDE) are compositionally biased toward basic and acidic residues. Phosphoserine is present on residues serine 203 and serine 205. FXF repeat units follow at residues 216 to 218 (FKF) and 247 to 249 (FSF). Over residues 243 to 278 (NAKPFSFSSATSTTEQTKSKNPLSLTEATKTNVDNN) the composition is skewed to polar residues. FXFG repeat units lie at residues 285 to 288 (FTFG), 302 to 305 (FVFG), and 318 to 321 (FTFG). The span at 315-324 (KSSFTFGSTT) shows a compositional bias: polar residues. Positions 315-604 (KSSFTFGSTT…KPINLQNGEE (290 aa)) are disordered. Positions 345 to 360 (SNDSNPSFSFSIPSKN) are enriched in low complexity. 2 positions are modified to phosphoserine: serine 348 and serine 351. The FXF 4 repeat unit spans residues 352-354 (FSF). Threonine 361 bears the Phosphothreonine mark. An FXFG 5 repeat occupies 369–372 (FSFG). A compositionally biased stretch (polar residues) spans 373-384 (VPNSSKNETSKP). One copy of the FXFG 6 repeat lies at 386-389 (FSFG). Positions 424–435 (TEKEKESKKDSK) are enriched in basic and acidic residues. FXFG repeat units lie at residues 438 to 441 (FSFG), 474 to 477 (FSFG), 493 to 496 (FTFG), 511 to 514 (FSFG), and 524 to 527 (FSFG). Low complexity predominate over residues 479 to 495 (NTNTTKTADTKAPTFTF). Residues 513-533 (FGTSQPNNTPSFSFGKTTANL) show a composition bias toward polar residues. Positions 534-548 (PANSSTSPAPSIPST) are enriched in low complexity. One copy of the FXF 5 repeat lies at 550–552 (FKF). The segment covering 574–584 (TEATGNESQDA) has biased composition (polar residues). Residue serine 581 is modified to Phosphoserine. Positions 583 to 720 (DATKVDATPE…AIEDAKKEMK (138 aa)) constitute a RanBD1 domain. Threonine 590 carries the phosphothreonine modification.

Component of the nuclear pore complex (NPC). NPC constitutes the exclusive means of nucleocytoplasmic transport. NPCs allow the passive diffusion of ions and small molecules and the active, nuclear transport receptor-mediated bidirectional transport of macromolecules such as proteins, RNAs, ribonucleoparticles (RNPs), and ribosomal subunits across the nuclear envelope. Due to its 8-fold rotational symmetry, all subunits are present with 8 copies or multiples thereof. Binds to the nuclear basket of the NPC through NUP60 in a (GSP1, GSP2) GTPase-GTP-dependent manner. Interacts through its FG repeats with nuclear transport factors. Interacts with KAP122.

It is found in the nucleus. It localises to the nuclear pore complex. Its subcellular location is the nucleus membrane. Its function is as follows. Functions as a component of the nuclear pore complex (NPC). NPC components, collectively referred to as nucleoporins (NUPs), can play the role of both NPC structural components and of docking or interaction partners for transiently associated nuclear transport factors. Active directional transport is assured by both, a Phe-Gly (FG) repeat affinity gradient for these transport factors across the NPC and a transport cofactor concentration gradient across the nuclear envelope (GSP1 and GSP2 GTPases associated predominantly with GTP in the nucleus, with GDP in the cytoplasm). As one of the FG repeat nucleoporins NUP2 is involved in interactions with and guidance of nuclear transport receptors such as SRP1-KAP95 (importin alpha and beta) through the NPC. Like the closely related NUP1 it also plays an important role in disassembling and recycling SRP1-KAP95 to the cytoplasm after nuclear import. Upon entry of the heterotrimeric SRP1-KAP95-cargo complex in the nucleus, NUP2 binds through its N-terminus to the SRP1 nuclear localization signal (NLS) binding site, thus accelerating the release of the NLS-cargo. SRP1 in turn is released from NUP2 by binding of the GSP1-GTP associated export factor CSE1. NUP2 may also have a chromatin boundary/insulator activity through indirect interaction with genomic DNA via CSE1 and blocking of heterochromatin spreading. The polypeptide is Nucleoporin NUP2 (NUP2) (Saccharomyces cerevisiae (strain ATCC 204508 / S288c) (Baker's yeast)).